The primary structure comprises 348 residues: Large ribosomal subunit protein uL3m (348 aa).

The transit peptide at 1-40 directs the protein to the mitochondrion; that stretch reads MPGWRLLAQAGARVLGCGARGLGADPGLERRKNILFFVRN.

The protein belongs to the universal ribosomal protein uL3 family. In terms of assembly, component of the mitochondrial ribosome large subunit (39S) which comprises a 16S rRNA and about 50 distinct proteins.

Its subcellular location is the mitochondrion. This is Large ribosomal subunit protein uL3m (Mrpl3) from Mus musculus (Mouse).